The primary structure comprises 269 residues: Eukaryotic translation initiation factor 3 subunit G-1 (269 aa).

The RRM domain maps to 188 to 266; it reads AAIRISNLSE…LILSVEWSKP (79 aa).

Belongs to the eIF-3 subunit G family. In terms of assembly, component of the eukaryotic translation initiation factor 3 (eIF-3) complex. The eIF-3 complex interacts with pix.

The protein resides in the cytoplasm. In terms of biological role, RNA-binding component of the eukaryotic translation initiation factor 3 (eIF-3) complex, which is involved in protein synthesis of a specialized repertoire of mRNAs and, together with other initiation factors, stimulates binding of mRNA and methionyl-tRNAi to the 40S ribosome. The eIF-3 complex specifically targets and initiates translation of a subset of mRNAs involved in cell proliferation. This subunit can bind 18S rRNA. The polypeptide is Eukaryotic translation initiation factor 3 subunit G-1 (Drosophila persimilis (Fruit fly)).